The sequence spans 272 residues: Phosphonates import ATP-binding protein PhnC 1 (272 aa).

The 245-residue stretch at 2–246 (LRIQALTKTY…VLTSIYGEED (245 aa)) folds into the ABC transporter domain. 35 to 42 (GPSGAGKS) lines the ATP pocket.

This sequence belongs to the ABC transporter superfamily. Phosphonates importer (TC 3.A.1.9.1) family. The complex is composed of two ATP-binding proteins (PhnC), two transmembrane proteins (PhnE) and a solute-binding protein (PhnD).

It localises to the cell inner membrane. The enzyme catalyses phosphonate(out) + ATP + H2O = phosphonate(in) + ADP + phosphate + H(+). Part of the ABC transporter complex PhnCDE involved in phosphonates import. Responsible for energy coupling to the transport system. The polypeptide is Phosphonates import ATP-binding protein PhnC 1 (Rhodopseudomonas palustris (strain BisB18)).